The chain runs to 484 residues: E-selectin (484 aa).

A signal peptide spans M1–A22. Residues W23–Y140 form the C-type lectin domain. Residues W23–P429 are Extracellular-facing. Disulfide bonds link C41/C139, C112/C131, C144/C155, C149/C164, C166/C175, C181/C222, C194/C204, C208/C235, C240/C285, C271/C298, C303/C348, C334/C361, C366/C407, and C393/C420. 3 N-linked (GlcNAc...) asparagine glycosylation sites follow: N61, N65, and N79. Positions 102, 104, and 110 each coordinate Ca(2+). A carbohydrate contacts are provided by residues E102 to E110, E114 to R119, and N127 to E129. Ca(2+) contacts are provided by N127 and D128. Positions T141–E176 constitute an EGF-like domain. N160 carries N-linked (GlcNAc...) asparagine glycosylation. 4 Sushi domains span residues V179–A237, V251–A300, V301–V363, and V364–A422. N-linked (GlcNAc...) asparagine glycosylation is present at N201. The N-linked (GlcNAc...) asparagine glycan is linked to N254. N-linked (GlcNAc...) asparagine glycosylation is found at N376 and N400. The helical transmembrane segment at L430 to L451 threads the bilayer. Over L452–I484 the chain is Cytoplasmic.

Belongs to the selectin/LECAM family. In terms of assembly, interacts with SELPLG/PSGL1 and PODXL2 through the sialyl Lewis X epitope. SELPLG sulfation appears not to be required for this interaction.

Its subcellular location is the cell membrane. In terms of biological role, cell-surface glycoprotein having a role in immunoadhesion. Mediates in the adhesion of blood neutrophils in cytokine-activated endothelium through interaction with SELPLG/PSGL1. May have a role in capillary morphogenesis. This Sus scrofa (Pig) protein is E-selectin (SELE).